The chain runs to 199 residues: Transmembrane protein 223 (199 aa).

Residues M1–R43 are Mitochondrial matrix-facing. Residues F44 to V64 traverse the membrane as a helical segment. The Mitochondrial intermembrane segment spans residues A65–G94. Residues L95–L115 traverse the membrane as a helical segment. Over R116 to L199 the chain is Mitochondrial matrix.

The protein belongs to the TMEM223 family. In terms of assembly, associates with the mitochondrial ribosome.

The protein localises to the mitochondrion inner membrane. In terms of biological role, mitochondrial ribosome-associated protein involved in the first steps of cytochrome c oxidase complex (complex IV) biogenesis. Stimulates the translation of MT-CO1 mRNA and is a constituent of early MT-CO1 assembly intermediates. This Mus musculus (Mouse) protein is Transmembrane protein 223.